The primary structure comprises 148 residues: uncharacterized protein (148 aa).

Residues 1–17 are compositionally biased toward low complexity; that stretch reads MCPPVRQRPAQAPPAKR. Disordered regions lie at residues 1 to 86 and 122 to 148; these read MCPP…VQSP and RAHR…TSPC. Residues 38–57 show a composition bias toward basic residues; the sequence is RPPKMQRRPRPPVAKRRRFP. Over residues 134-148 the composition is skewed to polar residues; that stretch reads QSRQRPSPDSQTSPC.

It belongs to the Epstein-Barr virus BLLF2 family.

This is an uncharacterized protein from Homo sapiens (Human).